Reading from the N-terminus, the 310-residue chain is tRNA uridine(34) hydroxylase (310 aa).

The 95-residue stretch at 124 to 218 (SDPEVLLIDT…YFEEVPQEES (95 aa)) folds into the Rhodanese domain. C178 serves as the catalytic Cysteine persulfide intermediate.

The protein belongs to the TrhO family.

The enzyme catalyses uridine(34) in tRNA + AH2 + O2 = 5-hydroxyuridine(34) in tRNA + A + H2O. In terms of biological role, catalyzes oxygen-dependent 5-hydroxyuridine (ho5U) modification at position 34 in tRNAs. This Pseudomonas putida (strain W619) protein is tRNA uridine(34) hydroxylase.